The sequence spans 293 residues: MNNKKFQVNFNNIPKLPKGSFGGGFGLLALGGVGLLALSSLVNVEGGHRAIVFNRFVGIKNKVYNEGTHFIVPWFERAEIYDVRAKPRSISSLTGSKDLQMVNITIRVLSKPKVSQLPAIYRTLGKDYDERVLPSIVNEILKSIVAQFNASQLITQREQVSRLIFKRLVDRAKDFNIELDDVSITHLNFGREYAAAIEAKQVAQQEAERARFLVEKALQDKRSIIVKAEGEAQSAQLINDAIKQSPYLVQLRTLEASKEIAHILSKSPNKLYISNETLLLNGFDLNNNQQPKK.

A helical; Signal-anchor for type II membrane protein membrane pass occupies residues 21 to 41 (FGGGFGLLALGGVGLLALSSL). Positions 190 to 235 (GREYAAAIEAKQVAQQEAERARFLVEKALQDKRSIIVKAEGEAQSA) form a coiled coil.

This sequence belongs to the prohibitin family. In terms of assembly, the mitochondrial prohibitin complex consists of two subunits (PHB1 and PHB2), assembled into a membrane-associated ring-shaped supercomplex of approximately 1 mDa.

Its subcellular location is the mitochondrion inner membrane. The protein resides in the cytoplasm. The protein localises to the nucleus. It is found in the cell membrane. Functionally, protein with pleiotropic attributes mediated in a cell-compartment- and tissue-specific manner, which include the plasma membrane-associated cell signaling functions, mitochondrial chaperone, and transcriptional co-regulator of transcription factors and sex steroid hormones in the nucleus. In the mitochondria, together with PHB, forms large ring complexes (prohibitin complexes) in the inner mitochondrial membrane (IMM) and functions as a chaperone protein that stabilizes mitochondrial respiratory enzymes and maintains mitochondrial integrity in the IMM, which is required for mitochondrial morphogenesis, neuronal survival, and normal lifespan. In terms of biological role, in the nucleus, serves as transcriptional co-regulator. This Dictyostelium discoideum (Social amoeba) protein is Prohibitin-2 (phbB).